A 547-amino-acid polypeptide reads, in one-letter code: Chaperonin GroEL 2 (547 aa).

ATP contacts are provided by residues 29-32 (TLGP), 86-90 (DGTTT), Gly418, 482-484 (NAA), and Asp498.

Belongs to the chaperonin (HSP60) family. In terms of assembly, forms a cylinder of 14 subunits composed of two heptameric rings stacked back-to-back. Interacts with the co-chaperonin GroES.

It localises to the cytoplasm. The catalysed reaction is ATP + H2O + a folded polypeptide = ADP + phosphate + an unfolded polypeptide.. Its function is as follows. Together with its co-chaperonin GroES, plays an essential role in assisting protein folding. The GroEL-GroES system forms a nano-cage that allows encapsulation of the non-native substrate proteins and provides a physical environment optimized to promote and accelerate protein folding. The sequence is that of Chaperonin GroEL 2 from Corynebacterium efficiens (strain DSM 44549 / YS-314 / AJ 12310 / JCM 11189 / NBRC 100395).